Reading from the N-terminus, the 181-residue chain is Oligoribonuclease (181 aa).

An Exonuclease domain is found at 8–171 (LVWLDMEMTG…ADIYESIDEL (164 aa)). Residue tyrosine 129 is part of the active site.

This sequence belongs to the oligoribonuclease family.

The protein localises to the cytoplasm. Functionally, 3'-to-5' exoribonuclease specific for small oligoribonucleotides. The chain is Oligoribonuclease from Bordetella bronchiseptica (strain ATCC BAA-588 / NCTC 13252 / RB50) (Alcaligenes bronchisepticus).